Here is a 373-residue protein sequence, read N- to C-terminus: Mannan endo-1,4-beta-mannosidase A (373 aa).

Residues 1-17 (MKGLFAFGLGLLSLVNA) form the signal peptide. Substrate contacts are provided by residues Trp81, Asn193, and 194-196 (EPR). Glu194 serves as the catalytic Proton donor/acceptor. Residues Cys197 and Cys200 are joined by a disulfide bond. Substrate is bound by residues Glu230, Tyr267, and Trp271. Cys289 and Cys296 are joined by a disulfide. The Nucleophile role is filled by Glu300. Cysteines 308 and 359 form a disulfide. Trp332 contacts substrate.

This sequence belongs to the glycosyl hydrolase 5 (cellulase A) family. As to quaternary structure, monomer. Post-translationally, not glycosylated.

It is found in the secreted. The catalysed reaction is Random hydrolysis of (1-&gt;4)-beta-D-mannosidic linkages in mannans, galactomannans and glucomannans.. Endo-1,4-mannanase that catalyzes the random hydrolysis of (1-&gt;4)-beta-D-mannosidic linkages in mannans and heteromannans. It is a crucial enzyme for depolymerization of seed galactomannans and wood galactoglucomannans. Hydrolyzes structurally different mannan polysaccharides, such as galactomannans, glucomannans, and beta-1,4-mannans from different sources, yielding principally mannobiose. Also has transglycosylation activity. The sequence is that of Mannan endo-1,4-beta-mannosidase A from Podospora anserina (strain S / ATCC MYA-4624 / DSM 980 / FGSC 10383) (Pleurage anserina).